An 86-amino-acid chain; its full sequence is Small ribosomal subunit protein bS20 (86 aa).

Belongs to the bacterial ribosomal protein bS20 family.

In terms of biological role, binds directly to 16S ribosomal RNA. The sequence is that of Small ribosomal subunit protein bS20 from Pseudarthrobacter chlorophenolicus (strain ATCC 700700 / DSM 12829 / CIP 107037 / JCM 12360 / KCTC 9906 / NCIMB 13794 / A6) (Arthrobacter chlorophenolicus).